The primary structure comprises 267 residues: Hydroxyethylthiazole kinase 2 (267 aa).

Residue methionine 41 coordinates substrate. ATP is bound by residues lysine 116 and threonine 166. Glycine 193 is a substrate binding site.

It belongs to the Thz kinase family. Requires Mg(2+) as cofactor.

It catalyses the reaction 5-(2-hydroxyethyl)-4-methylthiazole + ATP = 4-methyl-5-(2-phosphooxyethyl)-thiazole + ADP + H(+). It functions in the pathway cofactor biosynthesis; thiamine diphosphate biosynthesis; 4-methyl-5-(2-phosphoethyl)-thiazole from 5-(2-hydroxyethyl)-4-methylthiazole: step 1/1. Catalyzes the phosphorylation of the hydroxyl group of 4-methyl-5-beta-hydroxyethylthiazole (THZ). The protein is Hydroxyethylthiazole kinase 2 of Streptococcus pneumoniae (strain 70585).